The chain runs to 162 residues: Crossover junction endodeoxyribonuclease RuvC (162 aa).

Catalysis depends on residues aspartate 7, glutamate 67, and aspartate 140. Mg(2+)-binding residues include aspartate 7, glutamate 67, and aspartate 140.

This sequence belongs to the RuvC family. Homodimer which binds Holliday junction (HJ) DNA. The HJ becomes 2-fold symmetrical on binding to RuvC with unstacked arms; it has a different conformation from HJ DNA in complex with RuvA. In the full resolvosome a probable DNA-RuvA(4)-RuvB(12)-RuvC(2) complex forms which resolves the HJ. The cofactor is Mg(2+).

It is found in the cytoplasm. It carries out the reaction Endonucleolytic cleavage at a junction such as a reciprocal single-stranded crossover between two homologous DNA duplexes (Holliday junction).. Its function is as follows. The RuvA-RuvB-RuvC complex processes Holliday junction (HJ) DNA during genetic recombination and DNA repair. Endonuclease that resolves HJ intermediates. Cleaves cruciform DNA by making single-stranded nicks across the HJ at symmetrical positions within the homologous arms, yielding a 5'-phosphate and a 3'-hydroxyl group; requires a central core of homology in the junction. The consensus cleavage sequence is 5'-(A/T)TT(C/G)-3'. Cleavage occurs on the 3'-side of the TT dinucleotide at the point of strand exchange. HJ branch migration catalyzed by RuvA-RuvB allows RuvC to scan DNA until it finds its consensus sequence, where it cleaves and resolves the cruciform DNA. The polypeptide is Crossover junction endodeoxyribonuclease RuvC (Heliobacterium modesticaldum (strain ATCC 51547 / Ice1)).